A 160-amino-acid polypeptide reads, in one-letter code: SsrA-binding protein (160 aa).

This sequence belongs to the SmpB family.

It is found in the cytoplasm. In terms of biological role, required for rescue of stalled ribosomes mediated by trans-translation. Binds to transfer-messenger RNA (tmRNA), required for stable association of tmRNA with ribosomes. tmRNA and SmpB together mimic tRNA shape, replacing the anticodon stem-loop with SmpB. tmRNA is encoded by the ssrA gene; the 2 termini fold to resemble tRNA(Ala) and it encodes a 'tag peptide', a short internal open reading frame. During trans-translation Ala-aminoacylated tmRNA acts like a tRNA, entering the A-site of stalled ribosomes, displacing the stalled mRNA. The ribosome then switches to translate the ORF on the tmRNA; the nascent peptide is terminated with the 'tag peptide' encoded by the tmRNA and targeted for degradation. The ribosome is freed to recommence translation, which seems to be the essential function of trans-translation. This Photorhabdus laumondii subsp. laumondii (strain DSM 15139 / CIP 105565 / TT01) (Photorhabdus luminescens subsp. laumondii) protein is SsrA-binding protein.